Consider the following 84-residue polypeptide: Alpha-mammal toxin Ts2 (84 aa).

A signal peptide spans 1-20 (MKGFLLFISILMMIGTIVVG). The LCN-type CS-alpha/beta domain maps to 21–83 (KEGYAMDHEG…VWDYATNKCG (63 aa)). Cystine bridges form between C31–C82, C35–C58, C43–C63, and C47–C65. A Cysteine amide modification is found at C82.

The protein belongs to the long (4 C-C) scorpion toxin superfamily. Sodium channel inhibitor family. Beta subfamily. As to expression, expressed by the venom gland.

The protein resides in the secreted. Its function is as follows. Alpha toxins bind voltage-independently at site-3 of sodium channels (Nav) and inhibit the inactivation of the activated channels, thereby blocking neuronal transmission. This toxin acts on Nav1.2/SCN2A, Nav1.3/SCN3A, Nav1.5/SCN5A, Nav1.6/SCN8A and Nav1.7/SCN9A voltage-gated sodium channels, with the highest affinity for Nav1.3/SCN3A, followed by Nav1.6/SCN8A and Nav1.7/SCN9A which are affected almost equally. Interestingly, shows a significant shift of the voltage dependence of activation for Nav1.3/SCN3A that is characteristic of beta-toxins. In addition, in presence of LPS, this toxin inhibits the release of NO, IL-6 and TNF-alpha in J774.1 cells. Further, in the absence of LPS, it stimulates the production of the anti-inflammatory cytokine IL-10. This toxin is active on mammals. In Tityus serrulatus (Brazilian scorpion), this protein is Alpha-mammal toxin Ts2.